Here is a 301-residue protein sequence, read N- to C-terminus: Probable 5-dehydro-4-deoxyglucarate dehydratase (301 aa).

This sequence belongs to the DapA family.

The enzyme catalyses 5-dehydro-4-deoxy-D-glucarate + H(+) = 2,5-dioxopentanoate + CO2 + H2O. It participates in carbohydrate acid metabolism; D-glucarate degradation; 2,5-dioxopentanoate from D-glucarate: step 2/2. This is Probable 5-dehydro-4-deoxyglucarate dehydratase from Chelativorans sp. (strain BNC1).